We begin with the raw amino-acid sequence, 167 residues long: S-ribosylhomocysteine lyase (167 aa).

Fe cation is bound by residues H54, H58, and C128.

The protein belongs to the LuxS family. In terms of assembly, homodimer. The cofactor is Fe cation.

The catalysed reaction is S-(5-deoxy-D-ribos-5-yl)-L-homocysteine = (S)-4,5-dihydroxypentane-2,3-dione + L-homocysteine. Involved in the synthesis of autoinducer 2 (AI-2) which is secreted by bacteria and is used to communicate both the cell density and the metabolic potential of the environment. The regulation of gene expression in response to changes in cell density is called quorum sensing. Catalyzes the transformation of S-ribosylhomocysteine (RHC) to homocysteine (HC) and 4,5-dihydroxy-2,3-pentadione (DPD). This chain is S-ribosylhomocysteine lyase, found in Haemophilus influenzae (strain PittGG).